A 428-amino-acid chain; its full sequence is Exodeoxyribonuclease 7 large subunit (428 aa).

Belongs to the XseA family. Heterooligomer composed of large and small subunits.

The protein resides in the cytoplasm. The catalysed reaction is Exonucleolytic cleavage in either 5'- to 3'- or 3'- to 5'-direction to yield nucleoside 5'-phosphates.. In terms of biological role, bidirectionally degrades single-stranded DNA into large acid-insoluble oligonucleotides, which are then degraded further into small acid-soluble oligonucleotides. This Mycobacterium leprae (strain TN) protein is Exodeoxyribonuclease 7 large subunit.